A 242-amino-acid polypeptide reads, in one-letter code: Zinc finger protein ZOP1 (242 aa).

A Matrin-type zinc finger spans residues 11 to 42 (KWCEFCKIWIQNNPTSIRNHDLGKRHRECVDK). The stretch at 42–71 (KKLTDMRERSAAKDKELKKNEKLLQQIEAK) forms a coiled coil. The tract at residues 154-242 (VKKPVSSSGA…PLLGLYNRPF (89 aa)) is disordered. The segment covering 155–172 (KKPVSSSGAGPSVGKPPG) has biased composition (low complexity). The span at 201–233 (RQDEKPKKVSAEEKAALKAREAARKRVEDREKP) shows a compositional bias: basic and acidic residues.

As to quaternary structure, component of a pre-mRNA splicing complex. Interacts with STA1. Interacts with PRP31.

The protein resides in the nucleus. Its subcellular location is the cajal body. Its function is as follows. Nucleic acid-binding protein that promotes Pol IV-dependent small interfering RNA (siRNA) accumulation, DNA methylation and transcriptional silencing. May possess both RNA-directed DNA methylation (RdDM)-dependent and -independent roles in transcriptional silencing. Acts as a pre-mRNA splicing factor that associates with several typical components of the splicing machinery as well as with Pol II. The polypeptide is Zinc finger protein ZOP1 (Arabidopsis thaliana (Mouse-ear cress)).